Here is a 530-residue protein sequence, read N- to C-terminus: MATETLDEKTPEVNSPAKEEIDVVPKEEKEVEKEKVDSPRIGEAEEEKKEDEEEGEAKEGELGEKDKEDDVESEEEEEEEEGSGSKKSSEKETVTPTSERPTRERKKVERFSLSTPMRAPPSKSVSIEKGRGTPLREIPNVAHKLSKRKADDNLMLLHTILFGKKAKAQMVKRNIGQFSGFAWSEKEEEKQRARIKEKIDKCVKEKLIVFCDVLDIPISRSNVKKEELAVKVLEFLESPKETRDVIIADQEKAKKRKSTPKRGKSGESSDTPAKRKRQTKKRDLPSDTEEGKDEGDADSEGTNDPHEEDDAAPEEESDHEKTDTDDEKDEVEVEKPSKKKSSSKKTVEESSGSKGKDKQPSAKGSARSGEKSSKQIAKSTSSPAKKQKVDHVESSKEKSKKQPSKPQAKGSKEKGKATKKGKAKAEPTRKEMLEVVSKILKEVDFNTATLSDILQKLSDHFGVELSHRKPEVKDVITEAINAMTDDEEEDEEEEAEAGSDKEKEEVKGEEEEEKAEAESDKEKEKEEPKD.

Composition is skewed to basic and acidic residues over residues 1 to 47 (MATE…AEEE) and 57 to 68 (AKEGELGEKDKE). The interval 1 to 130 (MATETLDEKT…PSKSVSIEKG (130 aa)) is disordered. Positions 41–61 (IGEAEEEKKEDEEEGEAKEGE) form a coiled coil. Acidic residues predominate over residues 69-82 (DDVESEEEEEEEEG). Composition is skewed to basic and acidic residues over residues 83–93 (SGSKKSSEKET) and 100–110 (RPTRERKKVER). Residues 185-205 (EKEEEKQRARIKEKIDKCVKE) adopt a coiled-coil conformation. Positions 246–430 (IIADQEKAKK…GKAKAEPTRK (185 aa)) are disordered. The segment covering 253–263 (AKKRKSTPKRG) has biased composition (basic residues). A Nuclear localization signal 1 motif is present at residues 260 to 267 (PKRGKSGE). Acidic residues predominate over residues 286-332 (SDTEEGKDEGDADSEGTNDPHEEDDAAPEEESDHEKTDTDDEKDEVE). 2 consecutive short sequence motifs (nuclear localization signal) follow at residues 343–350 (SKKTVEES) and 384–391 (AKKQKVDH). Polar residues predominate over residues 374-384 (KQIAKSTSSPA). Basic and acidic residues predominate over residues 387–397 (QKVDHVESSKE). One can recognise a DEK-C domain in the interval 426 to 481 (EPTRKEMLEVVSKILKEVDFNTATLSDILQKLSDHFGVELSHRKPEVKDVITEAIN). DNA-binding regions lie at residues 444–458 (DFNT…QKLS) and 473–477 (KDVIT). The segment at 482 to 530 (AMTDDEEEDEEEEAEAGSDKEKEEVKGEEEEEKAEAESDKEKEKEEPKD) is disordered. The segment covering 484 to 497 (TDDEEEDEEEEAEA) has biased composition (acidic residues). The stretch at 492-527 (EEEAEAGSDKEKEEVKGEEEEEKAEAESDKEKEKEE) forms a coiled coil. The segment covering 516–530 (EAESDKEKEKEEPKD) has biased composition (basic and acidic residues).

As to quaternary structure, found in a mRNA splicing-dependent exon junction complex (EJC). Binds specifically histones H3 and H4.

The protein resides in the nucleus. The protein localises to the nucleolus. Its function is as follows. Chromatin-associated protein which contributes to the modulation of chromatin structure (such as super-helical structure of DNA) and function. Binds to chromatin of protein-coding genes throughout the genome to regulate nucleosome occupancy and chromatin accessibility, and to modulate the expression of target genes. The sequence is that of DEK domain-containing chromatin-associated protein 2 from Arabidopsis thaliana (Mouse-ear cress).